A 309-amino-acid chain; its full sequence is HPr kinase/phosphorylase (309 aa).

Active-site residues include His-138 and Lys-159. 153 to 160 (GQSGVGKS) is an ATP binding site. Position 160 (Ser-160) interacts with Mg(2+). Asp-177 functions as the Proton acceptor; for phosphorylation activity. Proton donor; for dephosphorylation activity in the catalytic mechanism. The segment at 201 to 210 (LEIRGLGIIN) is important for the catalytic mechanism of both phosphorylation and dephosphorylation. Residue Glu-202 coordinates Mg(2+). Arg-243 is a catalytic residue. An important for the catalytic mechanism of dephosphorylation region spans residues 264–269 (PVRPGR).

It belongs to the HPrK/P family. As to quaternary structure, homohexamer. Mg(2+) serves as cofactor.

The enzyme catalyses [HPr protein]-L-serine + ATP = [HPr protein]-O-phospho-L-serine + ADP + H(+). The catalysed reaction is [HPr protein]-O-phospho-L-serine + phosphate + H(+) = [HPr protein]-L-serine + diphosphate. Catalyzes the ATP- as well as the pyrophosphate-dependent phosphorylation of a specific serine residue in HPr, a phosphocarrier protein of the phosphoenolpyruvate-dependent sugar phosphotransferase system (PTS). HprK/P also catalyzes the pyrophosphate-producing, inorganic phosphate-dependent dephosphorylation (phosphorolysis) of seryl-phosphorylated HPr (P-Ser-HPr). The two antagonistic activities of HprK/P are regulated by several intracellular metabolites, which change their concentration in response to the absence or presence of rapidly metabolisable carbon sources (glucose, fructose, etc.) in the growth medium. Also phosphorylates/dephosphorylates the HPr-like catabolite repression protein crh on a specific serine residue. Therefore, by controlling the phosphorylation state of HPr and crh, HPrK/P is a sensor enzyme that plays a major role in the regulation of carbon metabolism and sugar transport: it mediates carbon catabolite repression (CCR), and regulates PTS-catalyzed carbohydrate uptake and inducer exclusion. This Bacillus mycoides (strain KBAB4) (Bacillus weihenstephanensis) protein is HPr kinase/phosphorylase.